We begin with the raw amino-acid sequence, 481 residues long: Probable glycine dehydrogenase (decarboxylating) subunit 2 (481 aa).

K265 carries the post-translational modification N6-(pyridoxal phosphate)lysine.

It belongs to the GcvP family. C-terminal subunit subfamily. In terms of assembly, the glycine cleavage system is composed of four proteins: P, T, L and H. In this organism, the P 'protein' is a heterodimer of two subunits. It depends on pyridoxal 5'-phosphate as a cofactor.

It carries out the reaction N(6)-[(R)-lipoyl]-L-lysyl-[glycine-cleavage complex H protein] + glycine + H(+) = N(6)-[(R)-S(8)-aminomethyldihydrolipoyl]-L-lysyl-[glycine-cleavage complex H protein] + CO2. Functionally, the glycine cleavage system catalyzes the degradation of glycine. The P protein binds the alpha-amino group of glycine through its pyridoxal phosphate cofactor; CO(2) is released and the remaining methylamine moiety is then transferred to the lipoamide cofactor of the H protein. In Thermosipho melanesiensis (strain DSM 12029 / CIP 104789 / BI429), this protein is Probable glycine dehydrogenase (decarboxylating) subunit 2.